The following is a 588-amino-acid chain: Glutamate--tRNA ligase (588 aa).

The short motif at 112-122 (PNPDFYLHLGS) is the 'HIGH' region element.

It belongs to the class-I aminoacyl-tRNA synthetase family. Glutamate--tRNA ligase type 2 subfamily.

Its subcellular location is the cytoplasm. It catalyses the reaction tRNA(Glu) + L-glutamate + ATP = L-glutamyl-tRNA(Glu) + AMP + diphosphate. Its function is as follows. Catalyzes the attachment of glutamate to tRNA(Glu) in a two-step reaction: glutamate is first activated by ATP to form Glu-AMP and then transferred to the acceptor end of tRNA(Glu). The sequence is that of Glutamate--tRNA ligase from Caldivirga maquilingensis (strain ATCC 700844 / DSM 13496 / JCM 10307 / IC-167).